Reading from the N-terminus, the 727-residue chain is YTH domain-containing protein 1 (727 aa).

A compositionally biased stretch (basic and acidic residues) spans 1 to 12; it reads MAADSREEKDGE. A disordered region spans residues 1–338; it reads MAADSREEKD…KHEKLSSSVR (338 aa). Residue S35 is modified to Phosphoserine. Over residues 50–59 the composition is skewed to basic and acidic residues; sequence DRMESTDTKR. The span at 63–90 shows a compositional bias: polar residues; the sequence is SVHSRQLVSKPLSSSVSNNKRIVSTKGK. Positions 91-115 are enriched in basic and acidic residues; it reads SATEYKNEEYQRSERNKRLDADRKI. K96 participates in a covalent cross-link: Glycyl lysine isopeptide (Lys-Gly) (interchain with G-Cter in SUMO2). A phosphoserine mark is found at S118 and S120. The segment covering 124–144 has biased composition (basic and acidic residues); it reads EPYKNQPEKTCVRKRDPERRA. At S146 the chain carries Phosphoserine. Phosphothreonine is present on T148. 2 stretches are compositionally biased toward basic and acidic residues: residues 151-163 and 170-185; these read GSERIGLEVDRRA and SKEEVNSEEYGSDHET. The segment covering 199–254 has biased composition (acidic residues); the sequence is ENEEEGVEEDVEEDEEVEEDAEEDEEVDEDGEEEEEEEEEEEEEEEEEEEEYEQDE. Residues 255 to 270 are compositionally biased toward basic and acidic residues; that stretch reads RDQKEEGNDYDTRSEA. The span at 280–289 shows a compositional bias: polar residues; the sequence is FTDGSVRSGS. Phosphoserine occurs at positions 308, 315, 317, 318, and 320. Low complexity predominate over residues 315 to 325; that stretch reads SGSSASESYAG. Positions 355–492 constitute a YTH domain; that stretch reads ARFFLIKSNN…ECGTQLCLLF (138 aa). RNA-binding positions include 361-363 and 377-378; these read KSN and WS. At S424 the chain carries Phosphoserine. W428 contacts RNA. Phosphoserine is present on S435. Residue D476 participates in RNA binding. Residues 508 to 523 are compositionally biased toward basic residues; the sequence is RHKRRMHSQPRSRGRP. 3 disordered regions span residues 508–564, 607–643, and 669–727; these read RHKR…PGYL, GMPPYPGMEQPPHHPYYQHHAPPPQAHPPYSGHHPVP, and AVVS…RYRR. Positions 524 to 564 are enriched in basic and acidic residues; that stretch reads SRREPVRDVGRRRPEDYDIHNSRKKPRIDYPPEFHQRPGYL. S545 is subject to Phosphoserine. A compositionally biased stretch (basic and acidic residues) spans 679–727; sequence RERDRERERDRPRDNRRDRERDRGRDRERERERLCDRDRDRGERGRYRR.

Interacts with SRSF1. Interacts with SRSF2. Interacts with SRSF3. Interacts with SRSF7. Interacts with SRSF10. Interacts with CPSF6. Interacts with KHDRBS1/SAM68. Interacts with TRA2B. Interacts with KHDRBS3. Interacts with EMD. Interacts with RBMX. Interacts with ZCCHC8. In terms of processing, tyrosine phosphorylated.

It localises to the nucleus. The protein resides in the nucleus speckle. Its function is as follows. Regulator of alternative splicing that specifically recognizes and binds N6-methyladenosine (m6A)-containing RNAs. M6A is a modification present at internal sites of mRNAs and some non-coding RNAs and plays a role in the efficiency of mRNA splicing, processing and stability. Acts as a key regulator of exon-inclusion or exon-skipping during alternative splicing via interaction with mRNA splicing factors SRSF3 and SRSF10. Specifically binds m6A-containing mRNAs and promotes recruitment of SRSF3 to its mRNA-binding elements adjacent to m6A sites, leading to exon-inclusion during alternative splicing. In contrast, interaction with SRSF3 prevents interaction with SRSF10, a splicing factor that promotes exon skipping: this prevents SRSF10 from binding to its mRNA-binding sites close to m6A-containing regions, leading to inhibit exon skipping during alternative splicing. May also regulate alternative splice site selection. Also involved in nuclear export of m6A-containing mRNAs via interaction with SRSF3: interaction with SRSF3 facilitates m6A-containing mRNA-binding to both SRSF3 and NXF1, promoting mRNA nuclear export. Involved in S-adenosyl-L-methionine homeostasis by regulating expression of MAT2A transcripts, probably by binding m6A-containing MAT2A mRNAs. Also recognizes and binds m6A on other RNA molecules. Involved in random X inactivation mediated by Xist RNA: recognizes and binds m6A-containing Xist and promotes transcription repression activity of Xist. Also recognizes and binds m6A-containing single-stranded DNA. Involved in germline development: required for spermatogonial development in males and oocyte growth and maturation in females, probably via its role in alternative splicing. The chain is YTH domain-containing protein 1 from Homo sapiens (Human).